Consider the following 476-residue polypeptide: Transcription factor HBP-1b(c1) (476 aa).

Disordered stretches follow at residues 1–29 (ESRRGGGGPAAAAAAAGDPRGPMPGFGAP), 133–159 (HNNDNWGESSMADTSPRTDTSTDPDID), and 171–207 (QLAAPTASDSSDKSRDKLDHKSLRRLAQNREAARKSR). Residues 10–25 (AAAAAAAGDPRGPMPG) are compositionally biased toward low complexity. Polar residues predominate over residues 135–144 (NDNWGESSMA). Residues 180–191 (SSDKSRDKLDHK) show a composition bias toward basic and acidic residues. A bZIP domain is found at 189 to 252 (DHKSLRRLAQ…SSGDQSQSAS (64 aa)). Positions 191-211 (KSLRRLAQNREAARKSRLRKK) are basic motif. Positions 201 to 242 (EAARKSRLRKKAYIQNLESSRLKLTQLEQELQRARQQGIFIS) form a coiled coil. The tract at residues 217–231 (LESSRLKLTQLEQEL) is leucine-zipper. The 218-residue stretch at 256-473 (AVAFDMEYAR…RALSSLWLAR (218 aa)) folds into the DOG1 domain.

This sequence belongs to the bZIP family. In terms of assembly, binds DNA as a dimer.

It is found in the nucleus. Its function is as follows. Transcriptional activator that binds specifically to the DNA sequence 5'-TGACG-3'. Recognizes ocs elements like the as-1 motif of the cauliflower mosaic virus 35S promoter. Binding to the as-1-like cis elements mediate auxin- and salicylic acid-inducible transcription. Binds to the hexamer motif 5'-ACGTCA-3' of histone gene promoters. The chain is Transcription factor HBP-1b(c1) from Triticum aestivum (Wheat).